The primary structure comprises 1295 residues: Phosphoribosylformylglycinamidine synthase (1295 aa).

Residues 305–316 (GAATGSGGEIRD), 384–386 (TGY), and alanine 676 each bind ATP. Mg(2+)-binding residues include aspartate 677, glutamate 716, asparagine 720, and aspartate 884. Residue serine 886 coordinates ATP. The Glutamine amidotransferase type-1 domain maps to 1042-1295 (VAILREQGVN…MFRNARKHLG (254 aa)). Residue cysteine 1135 is the Nucleophile of the active site. Residues histidine 1260 and glutamate 1262 contribute to the active site.

In the N-terminal section; belongs to the FGAMS family. As to quaternary structure, monomer.

The protein resides in the cytoplasm. It carries out the reaction N(2)-formyl-N(1)-(5-phospho-beta-D-ribosyl)glycinamide + L-glutamine + ATP + H2O = 2-formamido-N(1)-(5-O-phospho-beta-D-ribosyl)acetamidine + L-glutamate + ADP + phosphate + H(+). Its pathway is purine metabolism; IMP biosynthesis via de novo pathway; 5-amino-1-(5-phospho-D-ribosyl)imidazole from N(2)-formyl-N(1)-(5-phospho-D-ribosyl)glycinamide: step 1/2. Functionally, phosphoribosylformylglycinamidine synthase involved in the purines biosynthetic pathway. Catalyzes the ATP-dependent conversion of formylglycinamide ribonucleotide (FGAR) and glutamine to yield formylglycinamidine ribonucleotide (FGAM) and glutamate. The polypeptide is Phosphoribosylformylglycinamidine synthase (Idiomarina loihiensis (strain ATCC BAA-735 / DSM 15497 / L2-TR)).